The sequence spans 428 residues: Histidine--tRNA ligase (428 aa).

The protein belongs to the class-II aminoacyl-tRNA synthetase family. As to quaternary structure, homodimer.

The protein resides in the cytoplasm. The enzyme catalyses tRNA(His) + L-histidine + ATP = L-histidyl-tRNA(His) + AMP + diphosphate + H(+). This is Histidine--tRNA ligase from Mesomycoplasma hyopneumoniae (strain J / ATCC 25934 / NCTC 10110) (Mycoplasma hyopneumoniae).